The sequence spans 454 residues: Adenosylmethionine-8-amino-7-oxononanoate aminotransferase (454 aa).

119-120 (GA) serves as a coordination point for pyridoxal 5'-phosphate. Tyr152 is a binding site for substrate. Asp257 contacts pyridoxal 5'-phosphate. The substrate site is built by Lys286, Gly321, and Arg416. The residue at position 286 (Lys286) is an N6-(pyridoxal phosphate)lysine.

It belongs to the class-III pyridoxal-phosphate-dependent aminotransferase family. BioA subfamily. In terms of assembly, homodimer. The cofactor is pyridoxal 5'-phosphate.

The protein localises to the cytoplasm. It carries out the reaction (8S)-8-amino-7-oxononanoate + S-adenosyl-L-methionine = S-adenosyl-4-methylsulfanyl-2-oxobutanoate + (7R,8S)-7,8-diammoniononanoate. It functions in the pathway cofactor biosynthesis; biotin biosynthesis; 7,8-diaminononanoate from 8-amino-7-oxononanoate (SAM route): step 1/1. In terms of biological role, catalyzes the transfer of the alpha-amino group from S-adenosyl-L-methionine (SAM) to 7-keto-8-aminopelargonic acid (KAPA) to form 7,8-diaminopelargonic acid (DAPA). It is the only aminotransferase known to utilize SAM as an amino donor. This chain is Adenosylmethionine-8-amino-7-oxononanoate aminotransferase, found in Anoxybacillus flavithermus (strain DSM 21510 / WK1).